The primary structure comprises 458 residues: Pyruvate kinase (458 aa).

Position 33 (R33) interacts with substrate. K(+) contacts are provided by N35, S37, and D67. N35–H38 is a binding site for ATP. The ATP site is built by R74 and K148. E214 is a Mg(2+) binding site. Substrate is bound by residues G237, D238, and T270. D238 contributes to the Mg(2+) binding site.

The protein belongs to the pyruvate kinase family. In terms of assembly, homotetramer. A divalent metal cation serves as cofactor.

It catalyses the reaction pyruvate + ATP = phosphoenolpyruvate + ADP + H(+). It participates in carbohydrate degradation; glycolysis; pyruvate from D-glyceraldehyde 3-phosphate: step 5/5. Its activity is regulated as follows. Not activated by classical allosteric effectors. The protein is Pyruvate kinase (pyk) of Aeropyrum pernix (strain ATCC 700893 / DSM 11879 / JCM 9820 / NBRC 100138 / K1).